A 463-amino-acid polypeptide reads, in one-letter code: Methionine aminopeptidase 2-2 (463 aa).

A disordered region spans residues 1–107; sequence MGAKTFEGGD…VPLSQLFPDG (107 aa). A compositionally biased stretch (acidic residues) spans 37-53; sequence EDGDGEFGTDDDDDGDG. The segment covering 69-83 has biased composition (basic residues); sequence PKKRKRSKKKKSNKK. His215 contributes to the substrate binding site. 3 residues coordinate a divalent metal cation: Asp236, Asp247, and His316. His324 contributes to the substrate binding site. A divalent metal cation is bound by residues Glu349 and Glu444.

The protein belongs to the peptidase M24A family. Methionine aminopeptidase eukaryotic type 2 subfamily. Co(2+) serves as cofactor. Requires Zn(2+) as cofactor. It depends on Mn(2+) as a cofactor. The cofactor is Fe(2+).

The protein localises to the cytoplasm. It carries out the reaction Release of N-terminal amino acids, preferentially methionine, from peptides and arylamides.. In terms of biological role, cotranslationally removes the N-terminal methionine from nascent proteins. The N-terminal methionine is often cleaved when the second residue in the primary sequence is small and uncharged (Met-Ala-, Cys, Gly, Pro, Ser, Thr, or Val). This chain is Methionine aminopeptidase 2-2, found in Talaromyces marneffei (strain ATCC 18224 / CBS 334.59 / QM 7333) (Penicillium marneffei).